Reading from the N-terminus, the 492-residue chain is Regulatory protein ViaA (492 aa).

Belongs to the ViaA family. As to quaternary structure, homodimer. Interacts with RavA.

It localises to the cytoplasm. Functionally, component of the RavA-ViaA chaperone complex, which may act on the membrane to optimize the function of some of the respiratory chains. ViaA stimulates the ATPase activity of RavA. The sequence is that of Regulatory protein ViaA from Pectobacterium carotovorum subsp. carotovorum (strain PC1).